A 136-amino-acid polypeptide reads, in one-letter code: DNA-directed RNA polymerase subunit omega (136 aa).

A disordered region spans residues 81 to 136; the sequence is EAEAVPLLSSSPAAAAVAPQSSGDDGDIQFDRMSEEDLLRGLENLAPPTETEDEGD. Positions 83–99 are enriched in low complexity; the sequence is EAVPLLSSSPAAAAVAP. Over residues 109-120 the composition is skewed to basic and acidic residues; the sequence is QFDRMSEEDLLR.

The protein belongs to the RNA polymerase subunit omega family. The RNAP catalytic core consists of 2 alpha, 1 beta, 1 beta' and 1 omega subunit. When a sigma factor is associated with the core the holoenzyme is formed, which can initiate transcription.

It carries out the reaction RNA(n) + a ribonucleoside 5'-triphosphate = RNA(n+1) + diphosphate. In terms of biological role, promotes RNA polymerase assembly. Latches the N- and C-terminal regions of the beta' subunit thereby facilitating its interaction with the beta and alpha subunits. This is DNA-directed RNA polymerase subunit omega from Methylobacterium nodulans (strain LMG 21967 / CNCM I-2342 / ORS 2060).